A 210-amino-acid polypeptide reads, in one-letter code: Endo-1,4-beta-xylanase A (210 aa).

Positions 1–19 are cleaved as a signal peptide; sequence MKLKKKMLTLLLTASMSFG. Residues 20-210 form the GH11 domain; that stretch reads LFGATSSAAT…SSGRSNVTVW (191 aa). Catalysis depends on glutamate 104, which acts as the Nucleophile. Catalysis depends on glutamate 197, which acts as the Proton donor.

The protein belongs to the glycosyl hydrolase 11 (cellulase G) family.

It catalyses the reaction Endohydrolysis of (1-&gt;4)-beta-D-xylosidic linkages in xylans.. It functions in the pathway glycan degradation; xylan degradation. This Geobacillus stearothermophilus (Bacillus stearothermophilus) protein is Endo-1,4-beta-xylanase A (xynA).